The primary structure comprises 916 residues: Isoleucine--tRNA ligase (916 aa).

Positions 57–67 match the 'HIGH' region motif; that stretch reads PYANGNLHMGH. Residue glutamate 554 coordinates L-isoleucyl-5'-AMP. A 'KMSKS' region motif is present at residues 595-599; that stretch reads KMSKS. Lysine 598 is a binding site for ATP. Zn(2+)-binding residues include cysteine 885, cysteine 888, cysteine 905, and cysteine 908.

Belongs to the class-I aminoacyl-tRNA synthetase family. IleS type 1 subfamily. In terms of assembly, monomer. Zn(2+) serves as cofactor.

It is found in the cytoplasm. It catalyses the reaction tRNA(Ile) + L-isoleucine + ATP = L-isoleucyl-tRNA(Ile) + AMP + diphosphate. Functionally, catalyzes the attachment of isoleucine to tRNA(Ile). As IleRS can inadvertently accommodate and process structurally similar amino acids such as valine, to avoid such errors it has two additional distinct tRNA(Ile)-dependent editing activities. One activity is designated as 'pretransfer' editing and involves the hydrolysis of activated Val-AMP. The other activity is designated 'posttransfer' editing and involves deacylation of mischarged Val-tRNA(Ile). The polypeptide is Isoleucine--tRNA ligase (Staphylococcus haemolyticus (strain JCSC1435)).